A 1331-amino-acid chain; its full sequence is DNA replication ATP-dependent helicase/nuclease JHS1 (1331 aa).

Residues 1 to 98 (MPPRKKPKSS…DMDQQLTEAS (98 aa)) are disordered. Residues 2–8 (PPRKKPK) carry the Nuclear localization signal motif. Polar residues predominate over residues 11–31 (ALKSNKQSSANHSSQPSTFGI). A compositionally biased stretch (low complexity) spans 40–52 (QNSQSTSNSHTST). The span at 57 to 81 (DQQNVNGLASDTAVLTPQNPLGTSN) shows a compositional bias: polar residues. Positions 82–91 (EKPDESKDMD) are enriched in basic and acidic residues. Residues 362-811 (ECALYLWDEW…CKLRTGDRVI (450 aa)) are nuclease activity. The [4Fe-4S] cluster site is built by Cys-422, Cys-666, Cys-669, and Cys-675. The helicase activity stretch occupies residues 812–1331 (LRTEVSHLTV…LNLLPGDLKP (520 aa)). In terms of domain architecture, UvrD-like helicase ATP-binding spans 924–1271 (NNDQRQAILK…VRSREKPRSS (348 aa)). 945–952 (GMPGTGKT) contacts ATP.

The protein belongs to the DNA2/NAM7 helicase family. [4Fe-4S] cluster serves as cofactor. Strongly expressed in meristems, including both root and shoot apical meristems (RAM and SAM). Also present in the vasculature and in young floral tissues.

The protein resides in the nucleus. The protein localises to the chromosome. The catalysed reaction is ATP + H2O = ADP + phosphate + H(+). Essential protein required during embryogenesis. Key enzyme involved in DNA replication and damage repair, shoot apical meristem (SAM) maintenance, and development. Involved in Okazaki fragments processing. Possesses different enzymatic activities, such as single-stranded DNA (ssDNA)-dependent ATPase, 5'-3' helicase and endonuclease activities. While the ATPase and endonuclease activities are well-defined and play a key role in Okazaki fragments processing and DSB repair, the 5'-3' DNA helicase activity is atypical: it cannot load onto its tracking strand internally and has an absolute free 5'-end requirement. The chain is DNA replication ATP-dependent helicase/nuclease JHS1 from Arabidopsis thaliana (Mouse-ear cress).